A 208-amino-acid polypeptide reads, in one-letter code: High frequency lysogenization protein HflD homolog (208 aa).

This sequence belongs to the HflD family.

It localises to the cytoplasm. The protein resides in the cell inner membrane. This is High frequency lysogenization protein HflD homolog from Pseudomonas entomophila (strain L48).